We begin with the raw amino-acid sequence, 176 residues long: Ubiquinol-cytochrome c reductase iron-sulfur subunit (176 aa).

A helical transmembrane segment spans residues 15 to 36 (FLFVATGAAAAVGGAAALWPFI). The Rieske domain maps to 87–174 (ARAVNVASLP…YQFVSDTKIQ (88 aa)). Positions 119, 121, 138, and 141 each coordinate [2Fe-2S] cluster. Residues C124 and C140 are joined by a disulfide bond.

The protein belongs to the Rieske iron-sulfur protein family. In terms of assembly, the main subunits of complex b-c1 are: cytochrome b, cytochrome c1 and the Rieske protein. It depends on [2Fe-2S] cluster as a cofactor.

Its subcellular location is the cell membrane. It carries out the reaction a quinol + 2 Fe(III)-[cytochrome c](out) = a quinone + 2 Fe(II)-[cytochrome c](out) + 2 H(+)(out). In terms of biological role, component of the ubiquinol-cytochrome c reductase complex (complex III or cytochrome b-c1 complex), which is a respiratory chain that generates an electrochemical potential coupled to ATP synthesis. This is Ubiquinol-cytochrome c reductase iron-sulfur subunit (petA) from Bradyrhizobium diazoefficiens (strain JCM 10833 / BCRC 13528 / IAM 13628 / NBRC 14792 / USDA 110).